Here is a 224-residue protein sequence, read N- to C-terminus: Phosphoglycolate phosphatase (224 aa).

Residue D10 is the Nucleophile of the active site. Mg(2+) is bound by residues D10, D12, and D176.

The protein belongs to the HAD-like hydrolase superfamily. CbbY/CbbZ/Gph/YieH family. It depends on Mg(2+) as a cofactor.

It catalyses the reaction 2-phosphoglycolate + H2O = glycolate + phosphate. The protein operates within organic acid metabolism; glycolate biosynthesis; glycolate from 2-phosphoglycolate: step 1/1. Specifically catalyzes the dephosphorylation of 2-phosphoglycolate. Is involved in the dissimilation of the intracellular 2-phosphoglycolate formed during the DNA repair of 3'-phosphoglycolate ends, a major class of DNA lesions induced by oxidative stress. This Pasteurella multocida (strain Pm70) protein is Phosphoglycolate phosphatase.